A 360-amino-acid polypeptide reads, in one-letter code: Dihydroorotate dehydrogenase (quinone) (360 aa).

FMN is bound by residues 66–70 (AGFDK) and T90. K70 serves as a coordination point for substrate. 115 to 119 (NRMGF) contributes to the substrate binding site. Residues N143 and N176 each contribute to the FMN site. N176 provides a ligand contact to substrate. Residue S179 is the Nucleophile of the active site. N181 provides a ligand contact to substrate. Residues K212 and T240 each contribute to the FMN site. Residue 241-242 (NT) coordinates substrate. FMN is bound by residues G264, G293, and 314–315 (YT).

The protein belongs to the dihydroorotate dehydrogenase family. Type 2 subfamily. As to quaternary structure, monomer. The cofactor is FMN.

It is found in the cell membrane. The catalysed reaction is (S)-dihydroorotate + a quinone = orotate + a quinol. It functions in the pathway pyrimidine metabolism; UMP biosynthesis via de novo pathway; orotate from (S)-dihydroorotate (quinone route): step 1/1. Its function is as follows. Catalyzes the conversion of dihydroorotate to orotate with quinone as electron acceptor. The chain is Dihydroorotate dehydrogenase (quinone) from Mycobacterium ulcerans (strain Agy99).